The primary structure comprises 1304 residues: Neuronal cell adhesion molecule (1304 aa).

The first 24 residues, 1–24 (MQLKIMPKKKRLSAGRVPLILFLC), serve as a signal peptide directing secretion. Topologically, residues 25–1167 (QMISALEVPL…ASRQVDIATQ (1143 aa)) are extracellular. 2 Ig-like domains span residues 46–134 (PTIT…AAVS) and 141–235 (PSRS…QPIS). Disulfide bonds link cysteine 68–cysteine 123 and cysteine 167–cysteine 218. The N-linked (GlcNAc...) asparagine glycan is linked to asparagine 83. N-linked (GlcNAc...) asparagine glycosylation is found at asparagine 223, asparagine 245, asparagine 251, asparagine 276, and asparagine 314. 4 Ig-like domains span residues 267-356 (PPTF…ISVR), 361-448 (PYWI…AFVN), 454-541 (PRIL…VHLE), and 545-632 (PTWI…AVLS). Intrachain disulfides connect cysteine 292/cysteine 340 and cysteine 382/cysteine 432. Asparagine 433 and asparagine 507 each carry an N-linked (GlcNAc...) asparagine glycan. Disulfide bonds link cysteine 476/cysteine 525 and cysteine 567/cysteine 616. N-linked (GlcNAc...) asparagine glycans are attached at residues asparagine 619, asparagine 716, and asparagine 802. 5 Fibronectin type-III domains span residues 649-744 (PPFD…TKAS), 746-843 (PDKN…SGED), 848-950 (APGN…TPEG), 954-1051 (APSS…VDEA), and 1064-1156 (QAVN…TGPA). Residue asparagine 858 is glycosylated (N-linked (GlcNAc...) (complex) asparagine). Residues asparagine 993, asparagine 1009, asparagine 1019, asparagine 1072, asparagine 1083, and asparagine 1115 are each glycosylated (N-linked (GlcNAc...) asparagine). The helical transmembrane segment at 1168–1190 (GWFIGLMCAVALLILILLIVCFI) threads the bilayer. The Cytoplasmic segment spans residues 1191-1304 (RRNKGGKYPV…SPVNAMNSFV (114 aa)). Positions 1199–1219 (PVKEKEDAHADPEIQPMKEDD) are enriched in basic and acidic residues. The tract at residues 1199–1304 (PVKEKEDAHA…SPVNAMNSFV (106 aa)) is disordered. Threonine 1221 bears the Phosphothreonine mark. Tyrosine 1225 carries the phosphotyrosine modification. Serine 1226 is subject to Phosphoserine. Over residues 1241–1250 (PSDRTVKKED) the composition is skewed to basic and acidic residues. Residues serine 1251, serine 1254, serine 1271, serine 1290, serine 1291, and serine 1295 each carry the phosphoserine modification. The segment covering 1288–1304 (NESSEAPSPVNAMNSFV) has biased composition (polar residues).

Belongs to the immunoglobulin superfamily. L1/neurofascin/NgCAM family. Constituent of a NFASC/NRCAM/ankyrin-G complex. Detected in a complex with CNTN1 and PTPRB. Interacts with GLDN/gliomedin. Interacts with MYOC. Detected in all the examined tissues. In the brain it was detected in the amygdala, caudate nucleus, corpus callosum, hippocampus, hypothalamus, substantia nigra, subthalamic nucleus and thalamus.

The protein localises to the cell membrane. It is found in the cell projection. The protein resides in the axon. It localises to the secreted. Functionally, cell adhesion protein that is required for normal responses to cell-cell contacts in brain and in the peripheral nervous system. Plays a role in neurite outgrowth in response to contactin binding. Plays a role in mediating cell-cell contacts between Schwann cells and axons. Plays a role in the formation and maintenance of the nodes of Ranvier on myelinated axons. Nodes of Ranvier contain clustered sodium channels that are crucial for the saltatory propagation of action potentials along myelinated axons. During development, nodes of Ranvier are formed by the fusion of two heminodes. Required for normal clustering of sodium channels at heminodes; not required for the formation of mature nodes with normal sodium channel clusters. Required, together with GLDN, for maintaining NFASC and sodium channel clusters at mature nodes of Ranvier. The protein is Neuronal cell adhesion molecule (NRCAM) of Homo sapiens (Human).